The following is a 1441-amino-acid chain: Cleavage and polyadenylation specificity factor subunit 1 (1441 aa).

Disordered regions lie at residues 404–435 (PASS…GGKT), 545–569 (EEET…DGRR), 713–775 (GGAR…PAPF), and 899–921 (FREK…EGSG). Residues 410–419 (EAADKEEPPS) are compositionally biased toward basic and acidic residues. 2 positions are modified to phosphoserine: S754 and S764. Positions 756 to 773 (SKEEARRSSQPPADRDPA) are enriched in basic and acidic residues.

The protein belongs to the CPSF1 family. Component of the cleavage and polyadenylation specificity factor (CPSF) complex, composed of CPSF1, CPSF2, CPSF3, CPSF4 and FIP1L1. Found in a complex with CPSF1, FIP1L1 and PAPOLA. Interacts with FIP1L1 and SRRM1. Interacts with TUT1; the interaction is direct and mediates the recruitment of the CPSF complex on the 3'UTR of selected pre-mRNAs. Interacts with TENT2/GLD2.

It localises to the nucleus. The protein resides in the nucleoplasm. In terms of biological role, component of the cleavage and polyadenylation specificity factor (CPSF) complex that plays a key role in pre-mRNA 3'-end formation, recognizing the AAUAAA signal sequence and interacting with poly(A) polymerase and other factors to bring about cleavage and poly(A) addition. This subunit is involved in the RNA recognition step of the polyadenylation reaction. May play a role in eye morphogenesis and the development of retinal ganglion cell projections to the midbrain. The protein is Cleavage and polyadenylation specificity factor subunit 1 (Cpsf1) of Mus musculus (Mouse).